The sequence spans 621 residues: Chaperone protein HscA homolog (621 aa).

Belongs to the heat shock protein 70 family.

In terms of biological role, chaperone involved in the maturation of iron-sulfur cluster-containing proteins. Has a low intrinsic ATPase activity which is markedly stimulated by HscB. The sequence is that of Chaperone protein HscA homolog from Cupriavidus metallidurans (strain ATCC 43123 / DSM 2839 / NBRC 102507 / CH34) (Ralstonia metallidurans).